Consider the following 99-residue polypeptide: Plastocyanin A'/A'' (99 aa).

Residues 1 to 99 (IEVLLGSDDG…AGMVGKVTVN (99 aa)) form the Plastocyanin-like domain. His-37, Cys-84, His-87, and Met-92 together coordinate Cu cation.

The protein belongs to the plastocyanin family. Cu(2+) is required as a cofactor.

It is found in the plastid. The protein localises to the chloroplast thylakoid membrane. Participates in electron transfer between P700 and the cytochrome b6-f complex in photosystem I. The protein is Plastocyanin A'/A'' of Nicotiana tabacum (Common tobacco).